Consider the following 251-residue polypeptide: MATSVLLACGLNEQKLPGFVHISEESNVDASFLISCVLGQRLRISNAGTLLVCLQHHYQHYFNAGMRLGYNTNIFQGKTLGVIDVLSDMAGEGLASKWLTNTEGQTLTDQLVEDIRAQVERNYASRNSYTVLIDNLSILFNLGASKLQVQQFCQDLAALGKEREKLTVITKLSNSDIYQLTDNNVAKLGQVRIQVLRLKSGVFREVDGKLLIERVLDEGNYACEETRKEVLYKVNDRNVKVFAPGEIGVKV.

It belongs to the ELP6 family. In terms of assembly, component of the elongator complex composed of Elp1, Elp2, Elp3, Elp4, Elp5 and Elp6. The elongator complex associates with and stabilizes microtubules; efficient interaction requires the full complex. Interacts with InR/Insulin-like receptor; the interaction may stabilize Elp6.

It localises to the cytoplasm. Its subcellular location is the nucleus. The protein resides in the cytoskeleton. The protein localises to the spindle. Its pathway is tRNA modification; 5-methoxycarbonylmethyl-2-thiouridine-tRNA biosynthesis. Functionally, component of the elongator complex, which is required for multiple tRNA modifications, including mcm5U (5-methoxycarbonylmethyl uridine), mcm5s2U (5-methoxycarbonylmethyl-2-thiouridine), and ncm5U (5-carbamoylmethyl uridine). The elongator complex catalyzes formation of carboxymethyluridine in the wobble base at position 34 in tRNAs. Binding by the elongator complex stabilizes microtubules and promotes their growth. This induces central spindle asymmetry, promoting polarized signaling endosome trafficking during asymmetric cell division and cell fate assignation of sensory organ precursor cells. Required in germ line cells for microtubule organization involved in oocyte polarization and chromosome organization. Involved in InR-TOR (insulin-like receptor-target of rapamycin) signaling regulation of cellular metabolism, autophagy and apoptosis. The sequence is that of Elongator complex protein 6 from Drosophila melanogaster (Fruit fly).